The following is a 619-amino-acid chain: CLPTM1-like membrane protein cnrB (619 aa).

Residues 1-21 form a disordered region; sequence MNNQGGAVAANGQRPQAQQQQ. Over residues 9–21 the composition is skewed to low complexity; that stretch reads AANGQRPQAQQQQ. The next 6 helical transmembrane spans lie at 26–46, 324–344, 360–380, 384–404, 445–465, and 474–496; these read IMGI…ASFA, WILG…FLAF, LSVK…LYLL, TSYM…WKLG, YLSW…LYYH, and VVSS…QLFI. The disordered stretch occupies residues 566–619; it reads SEEAEEVQQQDKKEIKEKVEEREEEKQEEEEEEKEKEEESTSSSKVTKRKTKKV. Over residues 574 to 590 the composition is skewed to basic and acidic residues; the sequence is QQDKKEIKEKVEEREEE. Acidic residues predominate over residues 591 to 605; that stretch reads KQEEEEEEKEKEEES.

Belongs to the CLPTM1 family.

The protein localises to the membrane. The protein is CLPTM1-like membrane protein cnrB (cnrB) of Dictyostelium discoideum (Social amoeba).